The following is a 580-amino-acid chain: Putative monoterpene synthase 8 (580 aa).

Residues 1-44 (MACTSNLSSLSKSWAVLDVPRGAPKATGLWLKRQFIFKTSRICM) constitute a chloroplast transit peptide. 5 residues coordinate Mg(2+): Asp333, Asp337, Asp478, Thr482, and Glu486. The DDXXD motif signature appears at 333 to 337 (DDIFD).

Belongs to the terpene synthase family. Tpsg subfamily. Monomer. It depends on Mg(2+) as a cofactor. The cofactor is Mn(2+). As to expression, confined to flowers.

The protein localises to the plastid. The protein resides in the chloroplast. It functions in the pathway secondary metabolite biosynthesis; terpenoid biosynthesis. In terms of biological role, monoterpene synthase (mono-TPS) involved in the biosynthesis of monoterpenes natural products, constituent of coffee beverage aroma. In Coffea arabica (Arabian coffee), this protein is Putative monoterpene synthase 8.